The sequence spans 358 residues: DNA methyltransferase CcrM (358 aa).

The tract at residues 1–260 (MKFGPETIIH…AKVVPIAPED (260 aa)) is methyltransferase. 2 DNA-binding regions (target strand DNA) span residues 31–34 (DPPY) and 39–45 (GGDLLRP). DNA-binding regions (non-target strand DNA) lie at residues 93–94 (YH) and 109–110 (WI). Histidine 94 contacts dsDNA. The target strand DNA DNA-binding region spans 122 to 132 (MPNFKGTRFAN). The non-target strand DNA DNA-binding region spans 153 to 157 (YDALK). The dsDNA site is built by glutamine 164 and arginine 179. A DNA-binding region (target strand DNA) is located at residues 187–193 (KAHPTQK). Residues 259–355 (EDLDVMGSKR…IDVLRAQVRA (97 aa)) enclose the RAMA domain. A linker region spans residues 261-270 (LDVMGSKRAE). Residues lysine 267 and arginine 272 each contribute to the dsDNA site. The tract at residues 272–358 (RVPFGTIVEA…LRAQVRAGMN (87 aa)) is non-specific DNA-binding. 2 DNA-binding regions (non-target strand DNA) span residues 315 to 317 (SIH) and 330 to 332 (NGW). Arginine 350 serves as a coordination point for dsDNA.

The protein belongs to the N(4)/N(6)-methyltransferase family. As to quaternary structure, homodimer. Rapidly degraded by Lon protease prior to cell division.

It carries out the reaction a 2'-deoxyadenosine in DNA + S-adenosyl-L-methionine = an N(6)-methyl-2'-deoxyadenosine in DNA + S-adenosyl-L-homocysteine + H(+). A beta subtype methylase that recognizes the double-stranded sequence 5'-GANTC-3' and methylates non-modifed A-2 on the hemimethylated, post-replicative DNA. Opens a bubble in the DNA at the recognition site, allowing precise recognition of the sequence and ensuring enzyme specificity. Functions only in the predivisional cell. Responsible for 5'-GANTC-3' methylation in the cell; methylation of hemimethylated sites generated after replication fork passage occurs late in the predivisional cell, near completion of chromosome replication but prior to cell division. Contributes to the accurate cell-cycle control of DNA replication and cellular morphology. The protein is DNA methyltransferase CcrM (ccrMIM) of Caulobacter vibrioides (strain ATCC 19089 / CIP 103742 / CB 15) (Caulobacter crescentus).